The chain runs to 407 residues: Imidazolonepropionase (407 aa).

2 residues coordinate Fe(3+): H72 and H74. Zn(2+) contacts are provided by H72 and H74. R81, Y144, and H177 together coordinate 4-imidazolone-5-propanoate. Y144 serves as a coordination point for N-formimidoyl-L-glutamate. A Fe(3+)-binding site is contributed by H242. H242 is a Zn(2+) binding site. Q245 provides a ligand contact to 4-imidazolone-5-propanoate. D317 is a binding site for Fe(3+). Residue D317 coordinates Zn(2+). Residues N319 and G321 each coordinate N-formimidoyl-L-glutamate. 4-imidazolone-5-propanoate is bound at residue T322.

The protein belongs to the metallo-dependent hydrolases superfamily. HutI family. The cofactor is Zn(2+). Fe(3+) is required as a cofactor.

It is found in the cytoplasm. The catalysed reaction is 4-imidazolone-5-propanoate + H2O = N-formimidoyl-L-glutamate. It participates in amino-acid degradation; L-histidine degradation into L-glutamate; N-formimidoyl-L-glutamate from L-histidine: step 3/3. In terms of biological role, catalyzes the hydrolytic cleavage of the carbon-nitrogen bond in imidazolone-5-propanoate to yield N-formimidoyl-L-glutamate. It is the third step in the universal histidine degradation pathway. The protein is Imidazolonepropionase of Rhizobium rhizogenes (Agrobacterium rhizogenes).